A 201-amino-acid chain; its full sequence is Recombination protein RecR (201 aa).

The segment at 60–75 adopts a C4-type zinc-finger fold; the sequence is CSCCGNVDTSDPCTIC. The Toprim domain maps to 83–178; sequence ATLIVVEDVS…RVTRLAHGVP (96 aa).

Belongs to the RecR family.

In terms of biological role, may play a role in DNA repair. It seems to be involved in an RecBC-independent recombinational process of DNA repair. It may act with RecF and RecO. The chain is Recombination protein RecR from Brucella abortus biovar 1 (strain 9-941).